A 965-amino-acid polypeptide reads, in one-letter code: Meiosis-specific coiled-coil domain-containing protein MEIOC (965 aa).

Disordered stretches follow at residues 1 to 22 (MEVS…EGPE) and 946 to 965 (VHES…TSKH). Polar residues predominate over residues 949–965 (SINSSNPMNQRGETSKH).

In terms of assembly, interacts with YTHDC2; binds transcripts that regulate the mitotic cell cycle inhibiting progression into metaphase, thereby allowing meiotic prophase to proceed normally. Interacts with RBM46. Expressed specifically in fetal ovary and postnatal and adult testes (at protein level). In adult testis expressed in spermatocytes, beginning in preleptotene and extending through most stages of meiotic prophase I, including leptotene, zygotene, and pachytene.

It is found in the cytoplasm. The protein localises to the nucleus. Functionally, is required for meiosis completion in both male and female germ cells. Confers stability to numerous meiotic mRNAs in gonads allowing proper initiation and progression into meiosis prophase I. The function may involve YTHDC2 and is independent of induction by retinoic acid (RA). Maintains an extended meiotic prophase I by properly promoting the transition from a mitotic to a meiotic cell cycle program by binding transcripts through its interaction with YTHDC2 that regulate the mitotic cell cycle. This is Meiosis-specific coiled-coil domain-containing protein MEIOC from Mus musculus (Mouse).